A 192-amino-acid chain; its full sequence is MAVVKSSEIEKGSFLLIKGAPHIVLEREFSKTGRGGAIVRLKLKNLKNKFVIRETLKGADTAEAIEIYEVSAQYLYKDKDVLVFMDLETYDQVSLDLKESANLQDKVPFLQESEIYSLVTFDNVVIDIKLAPKIAFEVVEVEAAVKGDTVTNAMKNITLNTGLVVKAPLFINVGDKVLINSETKEYAERIKN.

This sequence belongs to the elongation factor P family.

The protein localises to the cytoplasm. It functions in the pathway protein biosynthesis; polypeptide chain elongation. In terms of biological role, involved in peptide bond synthesis. Stimulates efficient translation and peptide-bond synthesis on native or reconstituted 70S ribosomes in vitro. Probably functions indirectly by altering the affinity of the ribosome for aminoacyl-tRNA, thus increasing their reactivity as acceptors for peptidyl transferase. This is Elongation factor P (efp) from Borreliella burgdorferi (strain ATCC 35210 / DSM 4680 / CIP 102532 / B31) (Borrelia burgdorferi).